A 261-amino-acid polypeptide reads, in one-letter code: Indole-3-glycerol phosphate synthase (261 aa).

This sequence belongs to the TrpC family.

It carries out the reaction 1-(2-carboxyphenylamino)-1-deoxy-D-ribulose 5-phosphate + H(+) = (1S,2R)-1-C-(indol-3-yl)glycerol 3-phosphate + CO2 + H2O. The protein operates within amino-acid biosynthesis; L-tryptophan biosynthesis; L-tryptophan from chorismate: step 4/5. The protein is Indole-3-glycerol phosphate synthase of Paraburkholderia phytofirmans (strain DSM 17436 / LMG 22146 / PsJN) (Burkholderia phytofirmans).